Consider the following 104-residue polypeptide: Replication factor A protein 3 (104 aa).

Belongs to the replication factor A protein 3 family. Component of the heterotrimeric canonical replication protein A complex (RPA).

It is found in the nucleus. In terms of biological role, as part of the replication protein A (RPA/RP-A), a single-stranded DNA-binding heterotrimeric complex, may play an essential role in DNA replication, recombination and repair. Binds and stabilizes single-stranded DNA intermediates, preventing complementary DNA reannealing and recruiting different proteins involved in DNA metabolism. This chain is Replication factor A protein 3 (ssb3), found in Schizosaccharomyces pombe (strain 972 / ATCC 24843) (Fission yeast).